The sequence spans 490 residues: UDP-glucosyl transferase 73M2 (490 aa).

Histidine 20 functions as the Proton acceptor in the catalytic mechanism. Catalysis depends on aspartate 124, which acts as the Charge relay. UDP is bound by residues serine 297, tryptophan 353, alanine 354, histidine 371, asparagine 375, serine 376, glutamate 379, and tyrosine 393.

This sequence belongs to the UDP-glycosyltransferase family. In terms of tissue distribution, mainly expressed in flowers, flower buds and young leaves, and, to a lesser extent, in old leaves, stems and roots.

It participates in secondary metabolite biosynthesis; terpenoid biosynthesis. Functionally, component of the oleanane-type triterpene saponins (e.g. saponarioside A and saponarioside B) biosynthetic pathway, leading to the production of natural products with detergent properties used as traditional sources of soap. A glycosyltransferase that mediates the conversion of QA-triFRX to QA-triFRXX via the elongation of the C-28 sugar chain with a D-xylose. In Saponaria officinalis (Common soapwort), this protein is UDP-glucosyl transferase 73M2.